Reading from the N-terminus, the 252-residue chain is MKVIFNADDFGLTQGVNQGIVKAHLDGVVKSTTLMVGMPAEQHAVQLAKQLPDLKIGLHLRFTAGRPLTGERNLTDEHGVFTAYRDFWQRRDYQPEAIYHEAIAQVEHFLKLGLTLSHLDSHHHAHTHPQLAPIIYEVAKKYHVPLRDIGMAGEEAFGCRYHFTDFFYDQRLGIDPLMKHLLELKERFDLVEVMCHPAFVDPLLEKCSGYAKQREEELHILTSAQLIQLLVAHDIEITDYSALISAPLHSCV.

2 residues coordinate Mg(2+): H59 and H122.

This sequence belongs to the YdjC deacetylase family. In terms of assembly, homodimer. It depends on Mg(2+) as a cofactor.

Probably catalyzes the deacetylation of acetylated carbohydrates an important step in the degradation of oligosaccharides. In Vibrio cholerae serotype O1 (strain ATCC 39315 / El Tor Inaba N16961), this protein is Carbohydrate deacetylase.